Reading from the N-terminus, the 186-residue chain is Nuclear transcription factor Y subunit B-1 (186 aa).

A disordered region spans residues 1–24 (MAGNKKRGGRNMDQVKKAAVRSDG). A DNA-binding region spans residues 34–40 (LPMANLV). The subunit association domain (SAD) stretch occupies residues 61 to 72 (THDCAVEFVGFV). The interval 123–142 (GGNRRVAPPPPAAATPLTPG) is disordered.

This sequence belongs to the NFYB/HAP3 subunit family. As to quaternary structure, heterotrimeric transcription factor composed of three components, NF-YA, NF-YB and NF-YC. NF-YB and NF-YC must interact and dimerize for NF-YA association and DNA binding. Interacts with MADS18. Forms a ternary complex with the MADS6-MADS18 heterodimer. As to expression, expressed in developing kernels.

It localises to the nucleus. Its function is as follows. Component of the NF-Y/HAP transcription factor complex. The NF-Y complex stimulates the transcription of various genes by recognizing and binding to a CCAAT motif in promoters. May act through association with MADS-box proteins. May regulate the expression of genes involved in flowering. This is Nuclear transcription factor Y subunit B-1 (NFYB1) from Oryza sativa subsp. japonica (Rice).